We begin with the raw amino-acid sequence, 182 residues long: uncharacterized protein (182 aa).

The stretch at 66-133 forms a coiled coil; sequence QKRKRREIKV…NLEIETNSDS (68 aa).

This is an uncharacterized protein from Acanthamoeba polyphaga (Amoeba).